A 496-amino-acid chain; its full sequence is Cytochrome P450 71D181 (496 aa).

Residues 1 to 21 (MDISISWVAIILVISSYFIFM) traverse the membrane as a helical; Signal-anchor for type II membrane protein segment. Heme is bound at residue C435. A disordered region spans residues 471 to 496 (MSETPGLSGPRKNPLIMVPTIHNPTS).

This sequence belongs to the cytochrome P450 family. Heme serves as cofactor. Expressed at low levels in flowers, leaves and stems.

The protein resides in the membrane. The catalysed reaction is alpha-terpinene + 2 reduced [NADPH--hemoprotein reductase] + 2 O2 = carvacrol + 2 oxidized [NADPH--hemoprotein reductase] + 3 H2O + 2 H(+). The enzyme catalyses gamma-terpinene + 2 reduced [NADPH--hemoprotein reductase] + 2 O2 = carvacrol + 2 oxidized [NADPH--hemoprotein reductase] + 3 H2O + 2 H(+). It carries out the reaction (4S)-limonene + reduced [NADPH--hemoprotein reductase] + O2 = (1S,5R)-carveol + oxidized [NADPH--hemoprotein reductase] + H2O + H(+). It catalyses the reaction (4R)-limonene + reduced [NADPH--hemoprotein reductase] + O2 = (1R,5S)-carveol + oxidized [NADPH--hemoprotein reductase] + H2O + H(+). It participates in secondary metabolite biosynthesis; terpenoid biosynthesis. Involved in the biosynthesis of phenolic monoterpenes natural products thymol and carvacrol which have a broad range of biological activities acting as antimicrobial compounds, insecticides, antioxidants and pharmaceutical agents. Catalyzes the C2-hydroxylation of gamma-terpinene and alpha-terpinene to produce carvacrol. Also mediates the C6-hydroxylation of (4S)-limonene and (4R)-limonene to form carveol. This is Cytochrome P450 71D181 from Origanum vulgare (Wild marjoram).